A 332-amino-acid polypeptide reads, in one-letter code: Protoheme IX farnesyltransferase (332 aa).

The next 7 helical transmembrane spans lie at 63-83 (LICTLGGGALAAAAAGALNCL), 109-129 (TVFLGAVSCTLAAAMLLISGV), 132-152 (LAAGLTLLGLCSYVILYTIIL), 160-180 (IVFGGVAGAIPPLVGASAATG), 188-208 (WLFSLVMLWTPAHFWALAILL), 245-265 (ILGVFALPEGGILYLIMLLPF), and 286-306 (AKGLFRWSILYMFGICLLLLI).

This sequence belongs to the UbiA prenyltransferase family. Protoheme IX farnesyltransferase subfamily.

Its subcellular location is the cell inner membrane. The enzyme catalyses heme b + (2E,6E)-farnesyl diphosphate + H2O = Fe(II)-heme o + diphosphate. It participates in porphyrin-containing compound metabolism; heme O biosynthesis; heme O from protoheme: step 1/1. In terms of biological role, converts heme B (protoheme IX) to heme O by substitution of the vinyl group on carbon 2 of heme B porphyrin ring with a hydroxyethyl farnesyl side group. The sequence is that of Protoheme IX farnesyltransferase from Prochlorococcus marinus subsp. pastoris (strain CCMP1986 / NIES-2087 / MED4).